Consider the following 359-residue polypeptide: Ribosomal RNA small subunit methyltransferase H (359 aa).

Residues 39–41 (AGH), Asp58, Phe87, Asp108, and Gln115 each bind S-adenosyl-L-methionine. Residues 339–359 (IQGSASPGRAKNTARIRTRRG) are disordered. The segment covering 350 to 359 (NTARIRTRRG) has biased composition (basic residues).

Belongs to the methyltransferase superfamily. RsmH family.

It is found in the cytoplasm. It catalyses the reaction cytidine(1402) in 16S rRNA + S-adenosyl-L-methionine = N(4)-methylcytidine(1402) in 16S rRNA + S-adenosyl-L-homocysteine + H(+). Functionally, specifically methylates the N4 position of cytidine in position 1402 (C1402) of 16S rRNA. This chain is Ribosomal RNA small subunit methyltransferase H, found in Bifidobacterium longum subsp. infantis (strain ATCC 15697 / DSM 20088 / JCM 1222 / NCTC 11817 / S12).